We begin with the raw amino-acid sequence, 387 residues long: EARP and GARP complex-interacting protein 1 (387 aa).

M1 bears the N-acetylmethionine mark. WD repeat units follow at residues D4–F48, I55–M101, E124–L164, V172–T214, Q219–T258, and E263–M302. The disordered stretch occupies residues F310–L335. S320 is subject to Phosphoserine. A compositionally biased stretch (basic and acidic residues) spans Q322–L335. The stretch at N338–R379 is one WD 7 repeat.

Belongs to the WD repeat EIPR1 family. As to quaternary structure, interacts with two multisubunit tethering complexes: EARP composed of VPS50, VPS51, VPS52 and VPS53 subunits and GARP complex composed of VPS51, VPS52, VPS53 and VPS54 subunits. Interacts with SNAP29.

The protein resides in the golgi apparatus. The protein localises to the trans-Golgi network. Its function is as follows. Acts as a component of endosomal retrieval machinery that is involved in protein transport from early endosomes to either recycling endosomes or the trans-Golgi network. Mediates the recruitment of Golgi-associated retrograde protein (GARP) complex to the trans-Golgi network and controls early endosome-to-Golgi transport of internalized protein. Promotes the recycling of internalized transferrin receptor (TFRC) to the plasma membrane through interaction with endosome-associated recycling protein (EARP) complex. Controls proper insulin distribution and secretion, and retention of cargo in mature dense core vesicles. Required for the stability of the endosome-associated retrograde protein (EARP) complex subunits and for proper localization and association of EARP with membranes. The sequence is that of EARP and GARP complex-interacting protein 1 from Homo sapiens (Human).